A 644-amino-acid chain; its full sequence is Fructose-1,6-bisphosphatase class 3 (644 aa).

The protein belongs to the FBPase class 3 family. It depends on Mn(2+) as a cofactor.

It catalyses the reaction beta-D-fructose 1,6-bisphosphate + H2O = beta-D-fructose 6-phosphate + phosphate. It participates in carbohydrate biosynthesis; gluconeogenesis. This chain is Fructose-1,6-bisphosphatase class 3, found in Oceanobacillus iheyensis (strain DSM 14371 / CIP 107618 / JCM 11309 / KCTC 3954 / HTE831).